The chain runs to 1072 residues: Integrator complex subunit 3 homolog (1072 aa).

Disordered regions lie at residues 920–941 (YPSS…STSI) and 1002–1072 (DTTV…NDSD). A phosphoserine mark is found at Ser-1042, Ser-1043, Ser-1047, and Ser-1048.

It belongs to the Integrator subunit 3 family. In terms of assembly, belongs to the multiprotein complex Integrator, at least composed of IntS1, IntS2, IntS3, IntS4, omd/IntS5, IntS6, defl/IntS7, IntS8, IntS9, IntS10, IntS11, IntS12, asun/IntS13, IntS14 and IntS15. The core complex associates with protein phosphatase 2A subunits mts/PP2A and Pp2A-29B, to form the Integrator-PP2A (INTAC) complex.

The protein localises to the nucleus. It is found in the cytoplasm. In terms of biological role, component of the integrator complex, a multiprotein complex that terminates RNA polymerase II (Pol II) transcription in the promoter-proximal region of genes. The integrator complex provides a quality checkpoint during transcription elongation by driving premature transcription termination of transcripts that are unfavorably configured for transcriptional elongation: the complex terminates transcription by (1) catalyzing dephosphorylation of the C-terminal domain (CTD) of Pol II subunit Polr2A/Rbp1 and Spt5, and (2) degrading the exiting nascent RNA transcript via endonuclease activity. The integrator complex is also involved in the 3'-end processing of the U7 snRNA, and also the spliceosomal snRNAs U1, U2, U4 and U5. The chain is Integrator complex subunit 3 homolog (IntS3) from Drosophila erecta (Fruit fly).